Here is a 262-residue protein sequence, read N- to C-terminus: Type III pantothenate kinase (262 aa).

Position 9-16 (9-16) interacts with ATP; it reads DAGNSRIK. Substrate-binding positions include Tyr-96 and 103–106; that span reads GSDR. Asp-105 (proton acceptor) is an active-site residue. Thr-129 is a binding site for ATP. A substrate-binding site is contributed by Thr-189.

Belongs to the type III pantothenate kinase family. In terms of assembly, homodimer. It depends on NH4(+) as a cofactor. The cofactor is K(+).

Its subcellular location is the cytoplasm. The catalysed reaction is (R)-pantothenate + ATP = (R)-4'-phosphopantothenate + ADP + H(+). Its pathway is cofactor biosynthesis; coenzyme A biosynthesis; CoA from (R)-pantothenate: step 1/5. Catalyzes the phosphorylation of pantothenate (Pan), the first step in CoA biosynthesis. The chain is Type III pantothenate kinase from Burkholderia vietnamiensis (strain G4 / LMG 22486) (Burkholderia cepacia (strain R1808)).